A 236-amino-acid polypeptide reads, in one-letter code: Ras-related protein RabY (236 aa).

A GTP-binding site is contributed by 18 to 25; that stretch reads GDRKTGKT. The Effector region signature appears at 40–48; that stretch reads YRQTNLLHF. GTP is bound by residues 66 to 70 and 126 to 129; these read DSQAD and NKSD. Positions 192 to 225 are enriched in low complexity; that stretch reads QQQQQQQQQQQQQQQQQQQQQQQQQQQQQQQHQQ. The interval 192–236 is disordered; sequence QQQQQQQQQQQQQQQQQQQQQQQQQQQQQQQHQQSSKTKIGCLIQ. Cysteine methyl ester is present on Cys-233. The S-geranylgeranyl cysteine moiety is linked to residue Cys-233. The propeptide at 234–236 is removed in mature form; sequence LIQ.

Belongs to the small GTPase superfamily. Rab family.

The protein resides in the cell membrane. The sequence is that of Ras-related protein RabY (rabY) from Dictyostelium discoideum (Social amoeba).